The sequence spans 116 residues: Non-specific lipid-transfer protein 10 (116 aa).

An N-terminal signal peptide occupies residues 1–22 (MMRVVLPLCLLLASIFAWGSEA). Disulfide bonds link cysteine 26/cysteine 73, cysteine 36/cysteine 50, cysteine 51/cysteine 98, and cysteine 71/cysteine 112.

Belongs to the plant LTP family.

In terms of biological role, plant non-specific lipid-transfer proteins transfer phospholipids as well as galactolipids across membranes. May play a role in wax or cutin deposition in the cell walls of expanding epidermal cells and certain secretory tissues. This is Non-specific lipid-transfer protein 10 (LTP10) from Arabidopsis thaliana (Mouse-ear cress).